The primary structure comprises 124 residues: Small ribosomal subunit protein uS12 (124 aa).

The tract at residues Met1–Pro42 is disordered. Asp89 carries the 3-methylthioaspartic acid modification. Residues Ala105 to Glu124 are disordered. Residues Gly113–Glu124 show a composition bias toward basic residues.

The protein belongs to the universal ribosomal protein uS12 family. In terms of assembly, part of the 30S ribosomal subunit. Contacts proteins S8 and S17. May interact with IF1 in the 30S initiation complex.

In terms of biological role, with S4 and S5 plays an important role in translational accuracy. Interacts with and stabilizes bases of the 16S rRNA that are involved in tRNA selection in the A site and with the mRNA backbone. Located at the interface of the 30S and 50S subunits, it traverses the body of the 30S subunit contacting proteins on the other side and probably holding the rRNA structure together. The combined cluster of proteins S8, S12 and S17 appears to hold together the shoulder and platform of the 30S subunit. The sequence is that of Small ribosomal subunit protein uS12 from Salinibacter ruber (strain DSM 13855 / M31).